Here is a 307-residue protein sequence, read N- to C-terminus: Acyl transferase (307 aa).

Catalysis depends on charge relay system residues S116, D213, and H243.

Belongs to the LuxD family.

Its pathway is lipid metabolism; fatty acid reduction for biolumincescence. Functionally, acyl transferase is part of the fatty acid reductase system required for aldehyde biosynthesis; it produces fatty acids for the luminescent reaction. This Photorhabdus luminescens (Xenorhabdus luminescens) protein is Acyl transferase.